The primary structure comprises 201 residues: 3-isopropylmalate dehydratase small subunit (201 aa).

This sequence belongs to the LeuD family. LeuD type 1 subfamily. As to quaternary structure, heterodimer of LeuC and LeuD.

It catalyses the reaction (2R,3S)-3-isopropylmalate = (2S)-2-isopropylmalate. It functions in the pathway amino-acid biosynthesis; L-leucine biosynthesis; L-leucine from 3-methyl-2-oxobutanoate: step 2/4. Catalyzes the isomerization between 2-isopropylmalate and 3-isopropylmalate, via the formation of 2-isopropylmaleate. The sequence is that of 3-isopropylmalate dehydratase small subunit from Xanthobacter autotrophicus (strain ATCC BAA-1158 / Py2).